The following is a 103-amino-acid chain: Small ribosomal subunit protein uS10 (103 aa).

The protein belongs to the universal ribosomal protein uS10 family. In terms of assembly, part of the 30S ribosomal subunit.

Functionally, involved in the binding of tRNA to the ribosomes. The sequence is that of Small ribosomal subunit protein uS10 from Sulfurovum sp. (strain NBC37-1).